Here is a 341-residue protein sequence, read N- to C-terminus: Transmembrane protein 120A-A (341 aa).

Topologically, residues 1–131 (MLFNPTGLTE…KQSKFAYKDE (131 aa)) are cytoplasmic. Lysine 129 lines the CoA pocket. Residues 132-151 (YEKFKLYLTVLLLFFSFTCR) form a helical membrane-spanning segment. Over 152 to 157 (FLVSYR) the chain is Extracellular. Residues 158-176 (VVDALFNFLLVWYYCTLTI) traverse the membrane as a helical segment. Topologically, residues 177–189 (RESILINNGSKIK) are cytoplasmic. CoA is bound by residues serine 186 and lysine 187. The chain crosses the membrane as a helical span at residues 190-208 (GWWVFQHYVSTFLSGVMLT). At 209-217 (WPDGELYQM) the chain is on the extracellular side. Residues 218-239 (FRNQFLSYSMYINFVQFFQYYY) form a helical membrane-spanning segment. CoA is bound by residues glutamine 236, tyrosine 239, glutamine 240, and histidine 282. The Cytoplasmic portion of the chain corresponds to 240-269 (QSGCLYRLRALGERHNMDLTVEGFQSWMWR). A helical membrane pass occupies residues 270–293 (GLTFLLPFLFLGHFFQLYNGITLF). Residues 294–303 (QMTQLPEWKE) lie on the Extracellular side of the membrane. Residues 304 to 329 (WQVLMCGSTFLVLFMGNFFTTLGVVY) form a helical membrane-spanning segment. The Cytoplasmic portion of the chain corresponds to 330–341 (HKYMDQDKAKGL). CoA is bound at residue lysine 331.

This sequence belongs to the TMEM120 family. Homodimer.

It is found in the cell membrane. The protein resides in the nucleus inner membrane. It localises to the endoplasmic reticulum. In terms of biological role, multifunctional protein involved in mechanosensation, and plays an essential role in lipid metabolism. May function as a potential ion channel involved in sensing mechanical stimuli. TMEM120A is structurally similar to a lipid-modifying enzyme, ELOVL7, and contains a bound coenzyme A molecule, which suggests it might function as an enzyme in lipid metabolism. The chain is Transmembrane protein 120A-A (tmem120aa) from Danio rerio (Zebrafish).